The following is a 455-amino-acid chain: GTPase Der (455 aa).

EngA-type G domains follow at residues 4–169 and 178–353; these read PVVA…PPKD and IQMA…EQHR. GTP is bound by residues 10–17, 57–61, 120–123, 184–191, 231–235, and 296–299; these read GRPNVGKS, DTGGL, NKCE, DTAGI, and NKWD. Residues 354–439 form the KH-like domain; sequence RRVSTSVVNE…PVKLYWRGKQ (86 aa).

This sequence belongs to the TRAFAC class TrmE-Era-EngA-EngB-Septin-like GTPase superfamily. EngA (Der) GTPase family. As to quaternary structure, associates with the 50S ribosomal subunit.

In terms of biological role, GTPase that plays an essential role in the late steps of ribosome biogenesis. The protein is GTPase Der of Parasynechococcus marenigrum (strain WH8102).